A 485-amino-acid chain; its full sequence is N-succinylglutamate 5-semialdehyde dehydrogenase (485 aa).

220–225 serves as a coordination point for NAD(+); sequence GSANTG. Active-site residues include Glu243 and Cys278.

The protein belongs to the aldehyde dehydrogenase family. AstD subfamily.

The catalysed reaction is N-succinyl-L-glutamate 5-semialdehyde + NAD(+) + H2O = N-succinyl-L-glutamate + NADH + 2 H(+). It functions in the pathway amino-acid degradation; L-arginine degradation via AST pathway; L-glutamate and succinate from L-arginine: step 4/5. Its function is as follows. Catalyzes the NAD-dependent reduction of succinylglutamate semialdehyde into succinylglutamate. The protein is N-succinylglutamate 5-semialdehyde dehydrogenase of Vibrio atlanticus (strain LGP32) (Vibrio splendidus (strain Mel32)).